A 269-amino-acid polypeptide reads, in one-letter code: 3-deoxy-manno-octulosonate cytidylyltransferase (269 aa).

It belongs to the KdsB family.

Its subcellular location is the cytoplasm. The catalysed reaction is 3-deoxy-alpha-D-manno-oct-2-ulosonate + CTP = CMP-3-deoxy-beta-D-manno-octulosonate + diphosphate. Its pathway is nucleotide-sugar biosynthesis; CMP-3-deoxy-D-manno-octulosonate biosynthesis; CMP-3-deoxy-D-manno-octulosonate from 3-deoxy-D-manno-octulosonate and CTP: step 1/1. It participates in bacterial outer membrane biogenesis; lipopolysaccharide biosynthesis. Functionally, activates KDO (a required 8-carbon sugar) for incorporation into bacterial lipopolysaccharide in Gram-negative bacteria. This is 3-deoxy-manno-octulosonate cytidylyltransferase from Cupriavidus taiwanensis (strain DSM 17343 / BCRC 17206 / CCUG 44338 / CIP 107171 / LMG 19424 / R1) (Ralstonia taiwanensis (strain LMG 19424)).